Here is a 128-residue protein sequence, read N- to C-terminus: S-adenosylmethionine decarboxylase proenzyme (128 aa).

The active-site Schiff-base intermediate with substrate; via pyruvic acid is the Ser-61. Ser-61 bears the Pyruvic acid (Ser); by autocatalysis mark. Catalysis depends on His-66, which acts as the Proton acceptor; for processing activity. The Proton donor; for catalytic activity role is filled by Cys-81.

This sequence belongs to the prokaryotic AdoMetDC family. Type 1 subfamily. Heterotetramer of two alpha and two beta chains arranged as a dimer of alpha/beta heterodimers. It depends on pyruvate as a cofactor. Post-translationally, is synthesized initially as an inactive proenzyme. Formation of the active enzyme involves a self-maturation process in which the active site pyruvoyl group is generated from an internal serine residue via an autocatalytic post-translational modification. Two non-identical subunits are generated from the proenzyme in this reaction, and the pyruvate is formed at the N-terminus of the alpha chain, which is derived from the carboxyl end of the proenzyme. The post-translation cleavage follows an unusual pathway, termed non-hydrolytic serinolysis, in which the side chain hydroxyl group of the serine supplies its oxygen atom to form the C-terminus of the beta chain, while the remainder of the serine residue undergoes an oxidative deamination to produce ammonia and the pyruvoyl group blocking the N-terminus of the alpha chain.

It catalyses the reaction S-adenosyl-L-methionine + H(+) = S-adenosyl 3-(methylsulfanyl)propylamine + CO2. It participates in amine and polyamine biosynthesis; S-adenosylmethioninamine biosynthesis; S-adenosylmethioninamine from S-adenosyl-L-methionine: step 1/1. Its function is as follows. Catalyzes the decarboxylation of S-adenosylmethionine to S-adenosylmethioninamine (dcAdoMet), the propylamine donor required for the synthesis of the polyamines spermine and spermidine from the diamine putrescine. This Synechococcus sp. (strain WH7803) protein is S-adenosylmethionine decarboxylase proenzyme.